The chain runs to 351 residues: Dihydroorotate dehydrogenase (quinone) (351 aa).

FMN is bound by residues 65–69 (AGLDK) and Thr-89. Lys-69 serves as a coordination point for substrate. 114–118 (NRLGF) contributes to the substrate binding site. Residues Asn-150 and Asn-183 each coordinate FMN. A substrate-binding site is contributed by Asn-183. Ser-186 serves as the catalytic Nucleophile. Substrate is bound at residue Asn-188. FMN-binding residues include Lys-228 and Thr-256. 257–258 (NT) serves as a coordination point for substrate. Residues Gly-279, Gly-308, and 329 to 330 (YT) each bind FMN.

This sequence belongs to the dihydroorotate dehydrogenase family. Type 2 subfamily. As to quaternary structure, monomer. It depends on FMN as a cofactor.

Its subcellular location is the cell membrane. It carries out the reaction (S)-dihydroorotate + a quinone = orotate + a quinol. It participates in pyrimidine metabolism; UMP biosynthesis via de novo pathway; orotate from (S)-dihydroorotate (quinone route): step 1/1. Its function is as follows. Catalyzes the conversion of dihydroorotate to orotate with quinone as electron acceptor. The chain is Dihydroorotate dehydrogenase (quinone) from Acidovorax sp. (strain JS42).